A 185-amino-acid chain; its full sequence is Elongation factor P (185 aa).

The protein belongs to the elongation factor P family.

Its subcellular location is the cytoplasm. The protein operates within protein biosynthesis; polypeptide chain elongation. Functionally, involved in peptide bond synthesis. Stimulates efficient translation and peptide-bond synthesis on native or reconstituted 70S ribosomes in vitro. Probably functions indirectly by altering the affinity of the ribosome for aminoacyl-tRNA, thus increasing their reactivity as acceptors for peptidyl transferase. The protein is Elongation factor P of Bacillus pumilus (strain SAFR-032).